A 241-amino-acid chain; its full sequence is Glycerol-3-phosphate acyltransferase (241 aa).

6 consecutive transmembrane segments (helical) span residues 3 to 23 (ILYS…LLGS), 63 to 83 (IVFA…SAIV), 97 to 117 (YISP…PAYY), 131 to 151 (LIIS…LLVV), 156 to 176 (IVSL…WMPW), and 198 to 218 (LVNY…LVLV).

This sequence belongs to the PlsY family. In terms of assembly, probably interacts with PlsX.

It localises to the cell membrane. It carries out the reaction an acyl phosphate + sn-glycerol 3-phosphate = a 1-acyl-sn-glycero-3-phosphate + phosphate. Its pathway is lipid metabolism; phospholipid metabolism. Its function is as follows. Catalyzes the transfer of an acyl group from acyl-phosphate (acyl-PO(4)) to glycerol-3-phosphate (G3P) to form lysophosphatidic acid (LPA). This enzyme utilizes acyl-phosphate as fatty acyl donor, but not acyl-CoA or acyl-ACP. In Mycoplasmopsis agalactiae (strain NCTC 10123 / CIP 59.7 / PG2) (Mycoplasma agalactiae), this protein is Glycerol-3-phosphate acyltransferase.